A 661-amino-acid polypeptide reads, in one-letter code: 72 kDa type IV collagenase (661 aa).

The signal sequence occupies residues 1–30; that stretch reads MTEARVSRGALAALLRALCALGCLLGRAAA. The propeptide at 31–110 is activation peptide; sequence APSPIIKFPG…PRCGNPDVAN (80 aa). Positions 101–108 match the Cysteine switch motif; the sequence is PRCGNPDV. C103 is a binding site for Zn(2+). The collagenase-like 1 stretch occupies residues 111 to 222; that stretch reads YNFFPRKPKW…LRTLGEGQVV (112 aa). 2 residues coordinate Ca(2+): D135 and D169. Zn(2+) is bound by residues H179 and D181. The Ca(2+) site is built by D186 and G187. H194 lines the Zn(2+) pocket. 3 residues coordinate Ca(2+): G201, G203, and D205. A Zn(2+)-binding site is contributed by H207. 3 residues coordinate Ca(2+): D209, D210, and E212. The interval 223 to 397 is collagen-binding; the sequence is RVKYGNADGE…WGFCPDQGYS (175 aa). 3 consecutive Fibronectin type-II domains span residues 229 to 277, 287 to 335, and 345 to 393; these read ADGE…FCPH, ADGQ…FCPE, and SEGA…FCPD. 6 disulfides stabilise this stretch: C234/C260, C248/C275, C292/C318, C306/C333, C350/C376, and C364/C391. A collagenase-like 2 region spans residues 398 to 466; it reads LFLVAAHEFG…GPTPTLGPVT (69 aa). H404 provides a ligand contact to Zn(2+). E405 is an active-site residue. The Zn(2+) site is built by H408 and H414. The segment at 415–661 is required for inhibitor TIMP2 binding; the sequence is SQDPGALMAP…GSIKSDWLGC (247 aa). 4 Hemopexin repeats span residues 469–517, 518–564, 566–614, and 615–661; these read LCKQ…WPEL, PEKI…GLPP, VQKV…WNAI, and PDNL…WLGC. C470 and C661 form a disulfide bridge. 3 residues coordinate Ca(2+): D477, D522, and D570. N-linked (GlcNAc...) asparagine glycosylation is present at N574. Ca(2+) is bound at residue D619. N643 is a glycosylation site (N-linked (GlcNAc...) asparagine).

This sequence belongs to the peptidase M10A family. Interacts (via the C-terminal hemopexin-like domains-containing region) with the integrin alpha-V/beta-3; the interaction promotes vascular invasion in angiogenic vessels and melamoma cells. Interacts (via the C-terminal PEX domain) with TIMP2 (via the C-terminal); the interaction inhibits the degradation activity. Interacts with GSK3B. Ca(2+) serves as cofactor. It depends on Zn(2+) as a cofactor. Post-translationally, phosphorylation on multiple sites modulates enzymatic activity. Phosphorylated by PKC in vitro. In terms of processing, the propeptide is processed by MMP14 (MT-MMP1) and MMP16 (MT-MMP3). Autocatalytic cleavage in the C-terminal produces the anti-angiogenic peptide, PEX. This processing appears to be facilitated by binding integrinv/beta3.

Its subcellular location is the secreted. The protein localises to the extracellular space. It is found in the extracellular matrix. The protein resides in the membrane. It localises to the nucleus. It catalyses the reaction Cleavage of gelatin type I and collagen types IV, V, VII, X. Cleaves the collagen-like sequence Pro-Gln-Gly-|-Ile-Ala-Gly-Gln.. Functionally, ubiquitinous metalloproteinase that is involved in diverse functions such as remodeling of the vasculature, angiogenesis, tissue repair, tumor invasion, inflammation, and atherosclerotic plaque rupture. As well as degrading extracellular matrix proteins, can also act on several nonmatrix proteins such as big endothelial 1 and beta-type CGRP promoting vasoconstriction. Also cleaves KISS at a Gly-|-Leu bond. Appears to have a role in myocardial cell death pathways. Contributes to myocardial oxidative stress by regulating the activity of GSK3beta. Cleaves GSK3beta in vitro. Involved in the formation of the fibrovascular tissues. In terms of biological role, PEX, the C-terminal non-catalytic fragment of MMP2, possesses anti-angiogenic and anti-tumor properties and inhibits cell migration and cell adhesion to FGF2 and vitronectin. Ligand for integrin alpha-v/beta-3 on the surface of blood vessels. The protein is 72 kDa type IV collagenase (MMP2) of Bos taurus (Bovine).